The following is a 638-amino-acid chain: Pentatricopeptide repeat-containing protein At1g59720, chloroplastic/mitochondrial (638 aa).

The transit peptide at 1–40 (MVVRSIIVSPPTTITYYHPMSIGLLVHPLSPHIPPASSPS) directs the protein to the chloroplast and mitochondrion. PPR repeat units lie at residues 82 to 112 (TLFLYGKILQLSSSFSDVNYAFRVFDSIENH), 113 to 148 (SSFMWNTLIRACAHDVSRKEEAFMLYRKMLERGESS), 150 to 184 (DKHTFPFVLKACAYIFGFSEGKQVHCQIVKHGFGG), 185 to 215 (DVYVNNGLIHLYGSCGCLDLARKVFDEMPER), 216 to 246 (SLVSWNSMIDALVRFGEYDSALQLFREMQRS), 250 to 280 (DGYTMQSVLSACAGLGSLSLGTWAHAFLLRK), 288 to 318 (DVLVKNSLIEMYCKCGSLRMAEQVFQGMQKR), 319 to 353 (DLASWNAMILGFATHGRAEEAMNFFDRMVDKRENV), 356 to 390 (NSVTFVGLLIACNHRGFVNKGRQYFDMMVRDYCIE), and 392 to 422 (ALEHYGCIVDLIARAGYITEAIDMVMSMPMK). Residues 427–510 (IWRSLLDACC…EPGCSSIEIN (84 aa)) form a type E motif region. Residues 511–541 (GISHEFFAGDTSHPQTKQIYQQLKVIDDRLR) are type E(+) motif. Positions 542 to 638 (SIGYLPDRSQ…DGSCSCLDYW (97 aa)) are type DYW motif.

This sequence belongs to the PPR family. PCMP-H subfamily. In terms of assembly, interacts with ORRM1. Interacts with VAR3/OZ1.

The protein resides in the plastid. It is found in the chloroplast. Its subcellular location is the mitochondrion. Functionally, involved in multiple sites RNA editing events in chloroplasts. Involved in the editing of the site 2 of ndhB (ndhB-2) and site 3 of ndhD (ndhD-3) transcripts, which are two plastid-encoded subunits of the chloroplast NAD(P)H dehydrogenase (NDH) complex. Required for the activity of the NDH complex of the photosynthetic electron transport chain. In Arabidopsis thaliana (Mouse-ear cress), this protein is Pentatricopeptide repeat-containing protein At1g59720, chloroplastic/mitochondrial (PCMP-H51).